The following is a 101-amino-acid chain: NAD(P)H-quinone oxidoreductase subunit 4L, chloroplastic (101 aa).

Transmembrane regions (helical) follow at residues 2–22, 32–52, and 61–81; these read MLEHVLVLSAYLFSIGIYGLI, MCLELILNAVNMNLVTFSDFF, and IFSIFVIAIAAAEAAIGPAIV.

Belongs to the complex I subunit 4L family. In terms of assembly, NDH is composed of at least 16 different subunits, 5 of which are encoded in the nucleus.

Its subcellular location is the plastid. It is found in the chloroplast thylakoid membrane. The catalysed reaction is a plastoquinone + NADH + (n+1) H(+)(in) = a plastoquinol + NAD(+) + n H(+)(out). The enzyme catalyses a plastoquinone + NADPH + (n+1) H(+)(in) = a plastoquinol + NADP(+) + n H(+)(out). NDH shuttles electrons from NAD(P)H:plastoquinone, via FMN and iron-sulfur (Fe-S) centers, to quinones in the photosynthetic chain and possibly in a chloroplast respiratory chain. The immediate electron acceptor for the enzyme in this species is believed to be plastoquinone. Couples the redox reaction to proton translocation, and thus conserves the redox energy in a proton gradient. The polypeptide is NAD(P)H-quinone oxidoreductase subunit 4L, chloroplastic (Lotus japonicus (Lotus corniculatus var. japonicus)).